An 801-amino-acid chain; its full sequence is N,N'-diacetylchitobiose phosphorylase (801 aa).

R333, R343, R349, D350, W490, and D492 together coordinate N-acetyl-alpha-D-glucosamine 1-phosphate. The Proton donor role is filled by D492. N-acetyl-D-glucosamine contacts are provided by D492, K636, and E637. E637, H644, Q690, T709, and G710 together coordinate N-acetyl-alpha-D-glucosamine 1-phosphate.

This sequence belongs to the glycosyl hydrolase 94 family. Homodimer.

It catalyses the reaction N,N'-diacetylchitobiose + phosphate = N-acetyl-alpha-D-glucosamine 1-phosphate + N-acetyl-D-glucosamine. Functionally, catalyzes the reversible phosphorolysis of chitobiose (N,N'-diacetylchitobiose or (GlcNAc)(2)) into N-acetyl-alpha-D-glucosamine 1-phosphate (GlcNAc-1-P) and N-acetyl-D-glucosamine (GlcNAc) with inversion of the anomeric configuration. In the synthetic reaction, is also active on glucose-1-phosphate with 10% activity as compared with that on GlcNAc-1-P. GlcNAc is the best acceptor substrate, but the enzyme can use aryl-beta-glycosides of GlcNAc as the acceptor substrate with 10-20% activities of GlcNAc. Shows no phosphorolytic activity on cellobiose. The protein is N,N'-diacetylchitobiose phosphorylase of Vibrio proteolyticus (Aeromonas proteolytica).